The sequence spans 212 residues: Thymidine kinase (212 aa).

Residues 11–18, 43–45, and 86–89 each bind ATP; these read SPMNAGKT, DTR, and DEAQ. The Proton acceptor role is filled by E87. F119 is a substrate binding site. The Zn(2+) site is built by C144, C147, C183, and C186.

This sequence belongs to the thymidine kinase family.

It catalyses the reaction thymidine + ATP = dTMP + ADP + H(+). This chain is Thymidine kinase (TK), found in Encephalitozoon cuniculi (strain GB-M1) (Microsporidian parasite).